The sequence spans 348 residues: Protein RecA (348 aa).

An ATP-binding site is contributed by 67–74 (GPESSGKT).

The protein belongs to the RecA family.

Its subcellular location is the cytoplasm. In terms of biological role, can catalyze the hydrolysis of ATP in the presence of single-stranded DNA, the ATP-dependent uptake of single-stranded DNA by duplex DNA, and the ATP-dependent hybridization of homologous single-stranded DNAs. It interacts with LexA causing its activation and leading to its autocatalytic cleavage. The sequence is that of Protein RecA from Salinispora tropica (strain ATCC BAA-916 / DSM 44818 / JCM 13857 / NBRC 105044 / CNB-440).